Reading from the N-terminus, the 448-residue chain is tRNA(Ile)-lysidine synthase (448 aa).

Residue 28–33 participates in ATP binding; the sequence is STGVDS.

The protein belongs to the tRNA(Ile)-lysidine synthase family.

The protein localises to the cytoplasm. It catalyses the reaction cytidine(34) in tRNA(Ile2) + L-lysine + ATP = lysidine(34) in tRNA(Ile2) + AMP + diphosphate + H(+). Its function is as follows. Ligates lysine onto the cytidine present at position 34 of the AUA codon-specific tRNA(Ile) that contains the anticodon CAU, in an ATP-dependent manner. Cytidine is converted to lysidine, thus changing the amino acid specificity of the tRNA from methionine to isoleucine. This is tRNA(Ile)-lysidine synthase from Lactiplantibacillus plantarum (strain ATCC BAA-793 / NCIMB 8826 / WCFS1) (Lactobacillus plantarum).